The primary structure comprises 960 residues: MTETGSYKDTVNLPKTNFDMRANAIKREPEIQKFWEENKIFESLSQNNPGELFILHDGPPYANGSLHIGHALNKILKDIINRYQLLQGRKVRYVPGWDCHGLPIELKVLQNLKSAERQNLTPLQLRQKAKEFALATVDNQRQNFKRYGVWGDWDNPYLTLKPEYEAAQIGVFGQMVLKGYIYRGLKPVHWSPSSKTALAEAELEYPEGHTSRSIYAAFPVTSFAEAAKPLLGEYLPDLGVAIWTTTPWTIPGNLAVAVNGDLNYSLVEVSRIGAETQSNFKYLIVAADLVERLAATISAQLTVKATFKGKELEHTTYRHPLFDRESPVVVGGDYITTESGTGLVHTAPGHGQEDYVVGLRYGLPILAPVDDNGDFTQEAGQFAGLNVLGEGNQAVIDALTAAGSLLKEEAYAHKYPYDWRTKKPTIFRATEQWFASVEGFRDEALKAIAAVKWIPAQGENRITPMVAERSDWCISRQRSWGVPIPVFYDEETGEPLLNEETINYVQAIIAEKGSDAWWELSVAELLPESYRNNGRSYRRGTDTMDVWFDSGSSWASVVKQRPELRYPADMYLEGSDQHRGWFQSSLLTSVSVNGIAPYKTVLTHGFVLDEQGRKMSKSEGNVVDPAIIINGGKDQKKEPPYGADVMRLWASSVDYTGDVRLGGNIIKQLNDVRGKIRNTARFLLGSLYDFDPEKNAVQFEEMPQLDKYMLHRIREVFEEVTEAFESFQFFRFFQTVQNFCVVDLSNFYLDVAKDRLYISAPDAFRRRSCQTVIHIALENLARAIAPVLCHTAEDIWQYLPYKTPYKSVFEAGWVQVEEKWHNPELAEFWQQLRQLRTDVNKVLEQARVEKMIGSSLEAKALIYVKDANSRKAIATLNPEVGNGVDELRYLFLTSQVELLDSADKLQDGKYTSQSDSWGIGVVNAEGQKCDRCWNYSTHVGESAEHPLLCERCVPALAGEF.

Residues proline 60 to histidine 70 carry the 'HIGH' region motif. Position 573 (glutamate 573) interacts with L-isoleucyl-5'-AMP. A 'KMSKS' region motif is present at residues lysine 614–serine 618. ATP is bound at residue lysine 617. 4 residues coordinate Zn(2+): cysteine 929, cysteine 932, cysteine 949, and cysteine 952.

This sequence belongs to the class-I aminoacyl-tRNA synthetase family. IleS type 1 subfamily. In terms of assembly, monomer. Zn(2+) is required as a cofactor.

Its subcellular location is the cytoplasm. The enzyme catalyses tRNA(Ile) + L-isoleucine + ATP = L-isoleucyl-tRNA(Ile) + AMP + diphosphate. Functionally, catalyzes the attachment of isoleucine to tRNA(Ile). As IleRS can inadvertently accommodate and process structurally similar amino acids such as valine, to avoid such errors it has two additional distinct tRNA(Ile)-dependent editing activities. One activity is designated as 'pretransfer' editing and involves the hydrolysis of activated Val-AMP. The other activity is designated 'posttransfer' editing and involves deacylation of mischarged Val-tRNA(Ile). This Nostoc sp. (strain PCC 7120 / SAG 25.82 / UTEX 2576) protein is Isoleucine--tRNA ligase.